Consider the following 461-residue polypeptide: Toxin CfTX-B (461 aa).

A signal peptide spans 1 to 24; sequence MDPRISSRLRALALLVFVISITDG. The propeptide occupies 25-31; the sequence is IPNRAKR.

Belongs to the jellyfish toxin family. Type II subfamily. Oligomer. In terms of processing, contains 2 disulfide bonds. Nematocytes.

Its subcellular location is the secreted. It localises to the nematocyst. The protein resides in the target cell membrane. Its function is as follows. The fraction containing this toxin and CfTX-B shows potent hemolytic activity. This fraction causes minor effects on the cardiovascular system of anesthetized rats (at 25 ug/kg), since it has no significant effects on heart rate but produces relatively small increases in mean arterial pressure. This is Toxin CfTX-B from Chironex fleckeri (Australian box jellyfish).